The sequence spans 409 residues: Peptidase T (409 aa).

Histidine 78 serves as a coordination point for Zn(2+). Aspartate 80 is a catalytic residue. Aspartate 140 serves as a coordination point for Zn(2+). Glutamate 173 (proton acceptor) is an active-site residue. Zn(2+) contacts are provided by glutamate 174, aspartate 196, and histidine 379.

This sequence belongs to the peptidase M20B family. Requires Zn(2+) as cofactor.

Its subcellular location is the cytoplasm. The enzyme catalyses Release of the N-terminal residue from a tripeptide.. Cleaves the N-terminal amino acid of tripeptides. The sequence is that of Peptidase T from Escherichia coli O139:H28 (strain E24377A / ETEC).